The primary structure comprises 481 residues: Glutamate--tRNA ligase (481 aa).

A 'HIGH' region motif is present at residues 9–19 (PSPTGNLHIGT). Positions 249–253 (KLSKR) match the 'KMSKS' region motif. Lys-252 lines the ATP pocket.

Belongs to the class-I aminoacyl-tRNA synthetase family. Glutamate--tRNA ligase type 1 subfamily. In terms of assembly, monomer.

The protein localises to the cytoplasm. The catalysed reaction is tRNA(Glu) + L-glutamate + ATP = L-glutamyl-tRNA(Glu) + AMP + diphosphate. Catalyzes the attachment of glutamate to tRNA(Glu) in a two-step reaction: glutamate is first activated by ATP to form Glu-AMP and then transferred to the acceptor end of tRNA(Glu). The sequence is that of Glutamate--tRNA ligase from Picosynechococcus sp. (strain ATCC 27264 / PCC 7002 / PR-6) (Agmenellum quadruplicatum).